The following is a 178-amino-acid chain: CASP-like protein 2A2 (178 aa).

Topologically, residues 1 to 22 (MDKTDQTAIDESALVLNRTEKS) are cytoplasmic. A helical membrane pass occupies residues 23–43 (AEAVLRVASMALSITGLVIMI). At 44–69 (KNSISNEFGSVSYSNIGAFMYLVSAN) the chain is on the extracellular side. Residues 70–90 (GVCAAYSLLSALAILALPCPI) form a helical membrane-spanning segment. Residues 91–96 (SKVQVR) are Cytoplasmic-facing. The helical transmembrane segment at 97–117 (TLFLLDQVVTYVVLAAGAVSA) threads the bilayer. The Extracellular portion of the chain corresponds to 118 to 145 (ETVYLAYYGNIPITWSSACDSYGSFCHN). The chain crosses the membrane as a helical span at residues 146-166 (ALISVVFTFVVSLLYMLLSLI). Residues 167 to 178 (SSYRLFTRFEAP) lie on the Cytoplasmic side of the membrane.

The protein belongs to the Casparian strip membrane proteins (CASP) family. As to quaternary structure, homodimer and heterodimers. Mostly expressed in flowers and buds and, to a lower extent, in roots and yellow siliques. Localized in the floral organ abscission zone.

It is found in the cell membrane. Functionally, involved in floral organ shedding. This Arabidopsis thaliana (Mouse-ear cress) protein is CASP-like protein 2A2.